Consider the following 137-residue polypeptide: FAD synthase (137 aa).

Residues 5-6 (TF), 10-13 (HPGH), and aspartate 88 each bind ATP.

The protein belongs to the archaeal FAD synthase family. In terms of assembly, homodimer. Requires a divalent metal cation as cofactor.

The enzyme catalyses FMN + ATP + H(+) = FAD + diphosphate. Its pathway is cofactor biosynthesis; FAD biosynthesis; FAD from FMN: step 1/1. Functionally, catalyzes the transfer of the AMP portion of ATP to flavin mononucleotide (FMN) to produce flavin adenine dinucleotide (FAD) coenzyme. The protein is FAD synthase of Archaeoglobus fulgidus (strain ATCC 49558 / DSM 4304 / JCM 9628 / NBRC 100126 / VC-16).